The following is a 526-amino-acid chain: Ubiquitin carboxyl-terminal hydrolase 17-like protein A (526 aa).

The interval 1 to 21 (MVVALSFPEADPALSSPDAPE) is disordered. The USP domain occupies 51 to 348 (CGLQNTGNSC…NAYVLFYVQQ (298 aa)). Cys-60 serves as the catalytic Nucleophile. The active-site Proton acceptor is His-307. Residues 374 to 385 (KKSRRKKHKKKS) show a composition bias toward basic residues. 2 disordered regions span residues 374-394 (KKSR…LGEP) and 465-494 (RSTA…SQGP). Residues 473–486 (DSPDKENQPLHNAD) are compositionally biased toward basic and acidic residues.

Belongs to the peptidase C19 family. Post-translationally, polyubiquitinated; ubiquitination leads to its subsequent degradation. In terms of tissue distribution, expressed in hematopoietic progenitor cell lines Ba/F3 and FDCP1. Not detected in brain, lung, liver, kidney, thymus, spleen and bone marrow.

It catalyses the reaction Thiol-dependent hydrolysis of ester, thioester, amide, peptide and isopeptide bonds formed by the C-terminal Gly of ubiquitin (a 76-residue protein attached to proteins as an intracellular targeting signal).. Its function is as follows. Deubiquitinating enzyme that removes conjugated ubiquitin from specific proteins to regulate different cellular processes. Has deubiquitinating enzyme activity for DNAH5, suggesting a role in the regulation of DNAH5 degradation by the ubiquitin-proteasome pathway. Has growth-suppressing activity; induces arrest in G1 phase upon controlled expression. This is Ubiquitin carboxyl-terminal hydrolase 17-like protein A (Usp17la) from Mus musculus (Mouse).